The following is a 142-amino-acid chain: MVLSAEEKALVVGLCGKISGHCDALGGEALDRLFASFGQTRTYFSHFDLSPGSADVKRHGGKVLSAIGEAAKHIDSMDQALSKLSDLHAYNLRVDPGNFQLLSHCIQAVLAAHFPADFTPQCQAAWDKFLAAVSAVLTSKYR.

Positions 2 to 142 constitute a Globin domain; it reads VLSAEEKALV…VSAVLTSKYR (141 aa). His59 provides a ligand contact to O2. Residue His88 coordinates heme b.

Belongs to the globin family. Heterotetramer of two alpha chains and two beta chains. In terms of tissue distribution, red blood cells.

In terms of biological role, involved in oxygen transport from the lung to the various peripheral tissues. This chain is Hemoglobin larval subunit alpha, found in Pleurodeles waltl (Iberian ribbed newt).